The following is a 190-amino-acid chain: Elongation factor P-like protein (190 aa).

This sequence belongs to the elongation factor P family.

The sequence is that of Elongation factor P-like protein from Shigella boydii serotype 4 (strain Sb227).